We begin with the raw amino-acid sequence, 204 residues long: Adenylyl-sulfate kinase (204 aa).

34–41 (GLSGSGKS) provides a ligand contact to ATP. The Phosphoserine intermediate role is filled by Ser108.

It belongs to the APS kinase family.

It carries out the reaction adenosine 5'-phosphosulfate + ATP = 3'-phosphoadenylyl sulfate + ADP + H(+). Its pathway is sulfur metabolism; hydrogen sulfide biosynthesis; sulfite from sulfate: step 2/3. Its function is as follows. Catalyzes the synthesis of activated sulfate. The sequence is that of Adenylyl-sulfate kinase from Phocaeicola vulgatus (strain ATCC 8482 / DSM 1447 / JCM 5826 / CCUG 4940 / NBRC 14291 / NCTC 11154) (Bacteroides vulgatus).